We begin with the raw amino-acid sequence, 363 residues long: Peptide chain release factor 2 (363 aa).

Gln-251 carries the post-translational modification N5-methylglutamine.

This sequence belongs to the prokaryotic/mitochondrial release factor family. Post-translationally, methylated by PrmC. Methylation increases the termination efficiency of RF2.

It is found in the cytoplasm. Its function is as follows. Peptide chain release factor 2 directs the termination of translation in response to the peptide chain termination codons UGA and UAA. The polypeptide is Peptide chain release factor 2 (Helicobacter acinonychis (strain Sheeba)).